Reading from the N-terminus, the 217-residue chain is Small ribosomal subunit protein uS3 (217 aa).

Positions 38 to 106 (IRQLIQTKLA…QVHINIVEIK (69 aa)) constitute a KH type-2 domain.

It belongs to the universal ribosomal protein uS3 family. In terms of assembly, part of the 30S ribosomal subunit. Forms a tight complex with proteins S10 and S14.

Binds the lower part of the 30S subunit head. Binds mRNA in the 70S ribosome, positioning it for translation. The protein is Small ribosomal subunit protein uS3 of Lactococcus lactis subsp. lactis (strain IL1403) (Streptococcus lactis).